The chain runs to 501 residues: 2-phosphoxylose phosphatase 1 (501 aa).

The Cytoplasmic segment spans residues 1-6 (MLLRNR). Residues 7–27 (FLLLLALAGLLAFLSLSLQFF) traverse the membrane as a helical; Signal-anchor for type II membrane protein segment. Topologically, residues 28-501 (SRWLPVSLQL…YYDACHQRLF (474 aa)) are lumenal. Histidine 120 serves as the catalytic Nucleophile. Asparagine 328 and asparagine 377 each carry an N-linked (GlcNAc...) asparagine glycan. Residue aspartate 402 is the Proton donor of the active site. Asparagine 488 carries N-linked (GlcNAc...) asparagine glycosylation.

This sequence belongs to the histidine acid phosphatase family.

Its subcellular location is the golgi apparatus membrane. It carries out the reaction 3-O-[beta-D-GlcA-(1-&gt;3)-beta-D-Gal-(1-&gt;3)-beta-D-Gal-(1-&gt;4)-beta-D-2-O-P-Xyl]-L-seryl-[protein] + H2O = 3-O-(beta-D-GlcA-(1-&gt;3)-beta-D-Gal-(1-&gt;3)-beta-D-Gal-(1-&gt;4)-beta-D-Xyl)-L-seryl-[protein] + phosphate. Its function is as follows. Responsible for the 2-O-dephosphorylation of xylose in the glycosaminoglycan-protein linkage region of proteoglycans thereby regulating the amount of mature glycosaminoglycan (GAG) chains. Sulfated glycosaminoglycans (GAGs), including heparan sulfate and chondroitin sulfate, are synthesized on the so-called common GAG-protein linkage region (GlcUAbeta1-3Galbeta1-3Galbeta1-4Xylbeta1-O-Ser) of core proteins, which is formed by the stepwise addition of monosaccharide residues by the respective specific glycosyltransferases. Xylose 2-O-dephosphorylation during completion of linkage region formation is a prerequisite for the initiation and efficient elongation of the repeating disaccharide region of GAG chains. This chain is 2-phosphoxylose phosphatase 1, found in Xenopus tropicalis (Western clawed frog).